The primary structure comprises 1014 residues: Nebulette (1014 aa).

The interval 1-24 (MRVPVFEDIKDETEEEKIGEEENE) is disordered. A compositionally biased stretch (acidic residues) spans 9–24 (IKDETEEEKIGEEENE). 23 Nebulin repeats span residues 29 to 63 (FYKPVIEDLSMELARKCTELISDIRYKEEFKKSKD), 64 to 99 (KCTFVTDSPMLNHVKNIGAFISEAKYKGTIKADLSN), 100 to 136 (SLYKRMPATIDSVFAGEVTQLQSEVAYKQKHDAAKGF), 137 to 172 (SDYAHMKEPPEVKHAMEVNKHQSNISYRKDVQDTHT), 173 to 205 (YSAELDRPDIKMATQISKIISNAEYKKGQGIMN), 206 to 241 (KEPAVIGRPDFEHAVEASKLSSQIKYKEKFDNEMKD), 242 to 278 (KKHHYNPLESASFRQNQLAATLASNVKYKKDIQNMHD), 279 to 313 (PVSDLPNLLFLDHVLKASKMLSGREYKKLFEENKG), 314 to 348 (MYHFDADAVEHLHHKGNAVLQSQVKYKEEYEKNKG), 349 to 385 (KPMLEFVETPSYQASKEAQKMQSEKVYKEDFEKEIKG), 386 to 422 (RSSLDLDKTPEFLHVKYITNLLREKEYKKDLENEIKG), 423 to 459 (KGMELNSEVLDIQRAKRASEMASEKEYKKDLESIIKG), 460 to 496 (KGMQAGTDTLEMQHAKKAAEIASEKDYKRDLETEIKG), 497 to 533 (KGMQVSTDTLDVQRAKKASEMASQKQYKKDLENEIKG), 534 to 569 (KGMQVSMDIPDILRAKRTSEIYSQRKYKDEAEKMLS), 570 to 599 (NYSTIADTPEIQRIKTTQQNISAVFYKKEV), 600 to 635 (GAGTAVKDSPEIERVKKNQQNISSVKYKEEIKHATA), 636 to 666 (ISDPPELKRVKENQKNISNLQYKEQNYKATP), 667 to 693 (VSMTPEIERVRRNQEQLSAVKYKGELQ), 694 to 728 (RGTAISDPPELKRAKENQKNISNVYYRGQLGRATT), 729 to 759 (LSVTPEMERVKKNQENISSVKYTQDHKQMKG), 760 to 794 (RPSLILDTPAMRHVKEAQNHISMVKYHEDFEKTKG), and 795 to 830 (RGFTPVVDDPVTERVRKNTQVVSDAAYKGVHPHIVE). An Omega-N-methylarginine modification is found at Asp-96. Arg-795 carries the post-translational modification Omega-N-methylarginine. Residues 836 to 953 (GIIVDLKVWR…VSSMRSMQHS (118 aa)) form a linker region. The SH3 domain maps to 954–1014 (PNLRTYRAMY…LPANYIEFVN (61 aa)).

Interacts (via nebulin repeats 1-5) with DESM (via rod region). Interacts (via SH3 domain) with XIRP2. In terms of assembly, interacts with ZYX/Zyxin. In terms of tissue distribution, abundantly expressed in cardiac muscle, but not in skeletal or smooth muscle. Localized to Z-lines in cardiac cells and to dense bodies in nonmuscle cells. Isoform 2 is expressed in non-muscle cells such as in fibroblasts.

The protein localises to the cytoplasm. Binds to actin and plays an important role in the assembly of the Z-disk. May functionally link sarcomeric actin to the desmin intermediate filaments in the heart muscle sarcomeres. In terms of biological role, may play a role in the assembly of focal adhesions. The polypeptide is Nebulette (Homo sapiens (Human)).